We begin with the raw amino-acid sequence, 372 residues long: Probable dual-specificity RNA methyltransferase RlmN (372 aa).

Residues methionine 1 to methionine 20 form a disordered region. Glutamate 112 serves as the catalytic Proton acceptor. In terms of domain architecture, Radical SAM core spans tyrosine 118 to arginine 357. The cysteines at positions 125 and 363 are disulfide-linked. Residues cysteine 132, cysteine 136, and cysteine 139 each contribute to the [4Fe-4S] cluster site. S-adenosyl-L-methionine-binding positions include glycine 187–glutamate 188, serine 221, serine 244–histidine 246, and asparagine 320. Cysteine 363 acts as the S-methylcysteine intermediate in catalysis.

It belongs to the radical SAM superfamily. RlmN family. Requires [4Fe-4S] cluster as cofactor.

It is found in the cytoplasm. The catalysed reaction is adenosine(2503) in 23S rRNA + 2 reduced [2Fe-2S]-[ferredoxin] + 2 S-adenosyl-L-methionine = 2-methyladenosine(2503) in 23S rRNA + 5'-deoxyadenosine + L-methionine + 2 oxidized [2Fe-2S]-[ferredoxin] + S-adenosyl-L-homocysteine. It carries out the reaction adenosine(37) in tRNA + 2 reduced [2Fe-2S]-[ferredoxin] + 2 S-adenosyl-L-methionine = 2-methyladenosine(37) in tRNA + 5'-deoxyadenosine + L-methionine + 2 oxidized [2Fe-2S]-[ferredoxin] + S-adenosyl-L-homocysteine. In terms of biological role, specifically methylates position 2 of adenine 2503 in 23S rRNA and position 2 of adenine 37 in tRNAs. The sequence is that of Probable dual-specificity RNA methyltransferase RlmN from Salinispora tropica (strain ATCC BAA-916 / DSM 44818 / JCM 13857 / NBRC 105044 / CNB-440).